Consider the following 579-residue polypeptide: V-type ATP synthase alpha chain (579 aa).

An ATP-binding site is contributed by 227–234 (GGFGTGKT).

This sequence belongs to the ATPase alpha/beta chains family.

It carries out the reaction ATP + H2O + 4 H(+)(in) = ADP + phosphate + 5 H(+)(out). Produces ATP from ADP in the presence of a proton gradient across the membrane. The V-type alpha chain is a catalytic subunit. In Anaeromyxobacter dehalogenans (strain 2CP-1 / ATCC BAA-258), this protein is V-type ATP synthase alpha chain.